The sequence spans 551 residues: Probable 4-coumarate--CoA ligase 1 (551 aa).

Ser205, Ser206, Gly207, Thr208, Thr209, and Lys213 together coordinate ATP. Residue Tyr253 participates in (E)-4-coumaroyl-AMP binding. Lys274 is a CoA binding site. Positions 276-346 (EPVRFLELIQ…RFKGRLVIKQ (71 aa)) are SBD1. (E)-4-coumaroyl-AMP contacts are provided by Ala323, Gln346, Gly347, and Thr351. 5 residues coordinate ATP: Gln346, Gly347, Thr351, Asp430, and Arg445. The segment at 347–409 (GYGATELSPA…IKGPNVMLGY (63 aa)) is SBD2. The (E)-4-coumaroyl-AMP site is built by Lys447 and Lys451. Residues Lys453 and Gly454 each contribute to the CoA site. Lys537 contacts ATP.

This sequence belongs to the ATP-dependent AMP-binding enzyme family. Mg(2+) serves as cofactor.

The catalysed reaction is (E)-4-coumarate + ATP + CoA = (E)-4-coumaroyl-CoA + AMP + diphosphate. It catalyses the reaction (E)-4-coumarate + ATP + H(+) = (E)-4-coumaroyl-AMP + diphosphate. It carries out the reaction (E)-4-coumaroyl-AMP + CoA = (E)-4-coumaroyl-CoA + AMP + H(+). It functions in the pathway phytoalexin biosynthesis; 3,4',5-trihydroxystilbene biosynthesis; 3,4',5-trihydroxystilbene from trans-4-coumarate: step 1/2. Functionally, carboxylate--CoA ligase that may use 4-coumarate as substrate. Follows a two-step reaction mechanism, wherein the carboxylate substrate first undergoes adenylation by ATP, followed by a thioesterification in the presence of CoA to yield the final CoA thioester. This Dictyostelium discoideum (Social amoeba) protein is Probable 4-coumarate--CoA ligase 1 (4cl1).